The sequence spans 318 residues: Beta-ketoacyl-[acyl-carrier-protein] synthase III (318 aa).

Catalysis depends on residues Cys113 and His245. The tract at residues 246–250 (QANIR) is ACP-binding. The active site involves Asn275.

The protein belongs to the thiolase-like superfamily. FabH family. In terms of assembly, homodimer.

Its subcellular location is the cytoplasm. The catalysed reaction is malonyl-[ACP] + acetyl-CoA + H(+) = 3-oxobutanoyl-[ACP] + CO2 + CoA. The protein operates within lipid metabolism; fatty acid biosynthesis. In terms of biological role, catalyzes the condensation reaction of fatty acid synthesis by the addition to an acyl acceptor of two carbons from malonyl-ACP. Catalyzes the first condensation reaction which initiates fatty acid synthesis and may therefore play a role in governing the total rate of fatty acid production. Possesses both acetoacetyl-ACP synthase and acetyl transacylase activities. Its substrate specificity determines the biosynthesis of branched-chain and/or straight-chain of fatty acids. The protein is Beta-ketoacyl-[acyl-carrier-protein] synthase III of Wolbachia pipientis subsp. Culex pipiens (strain wPip).